The following is a 198-amino-acid chain: Na(+)-translocating NADH-quinone reductase subunit E (198 aa).

Helical transmembrane passes span 11–31 (SVFIENMALSFFLGMCTFLAV), 35–55 (VSTAFGLGVAVTVVLGISVPV), 77–97 (FLNFITFIGVIAALVQILEMI), 110–130 (GIFLPLITVNCAIFGGVSFMV), 140–160 (IVYGIGAGTGWMLAIVALAGI), and 176–196 (LGITFITVGLMALGFMSFSGV).

The protein belongs to the NqrDE/RnfAE family. In terms of assembly, composed of six subunits; NqrA, NqrB, NqrC, NqrD, NqrE and NqrF.

The protein resides in the cell inner membrane. The enzyme catalyses a ubiquinone + n Na(+)(in) + NADH + H(+) = a ubiquinol + n Na(+)(out) + NAD(+). In terms of biological role, NQR complex catalyzes the reduction of ubiquinone-1 to ubiquinol by two successive reactions, coupled with the transport of Na(+) ions from the cytoplasm to the periplasm. NqrA to NqrE are probably involved in the second step, the conversion of ubisemiquinone to ubiquinol. The protein is Na(+)-translocating NADH-quinone reductase subunit E of Histophilus somni (strain 2336) (Haemophilus somnus).